A 150-amino-acid chain; its full sequence is D-aminoacyl-tRNA deacylase (150 aa).

The Gly-cisPro motif, important for rejection of L-amino acids motif lies at 136–137; the sequence is GP.

This sequence belongs to the DTD family. In terms of assembly, homodimer.

It localises to the cytoplasm. The catalysed reaction is glycyl-tRNA(Ala) + H2O = tRNA(Ala) + glycine + H(+). It catalyses the reaction a D-aminoacyl-tRNA + H2O = a tRNA + a D-alpha-amino acid + H(+). Its function is as follows. An aminoacyl-tRNA editing enzyme that deacylates mischarged D-aminoacyl-tRNAs. Also deacylates mischarged glycyl-tRNA(Ala), protecting cells against glycine mischarging by AlaRS. Acts via tRNA-based rather than protein-based catalysis; rejects L-amino acids rather than detecting D-amino acids in the active site. By recycling D-aminoacyl-tRNA to D-amino acids and free tRNA molecules, this enzyme counteracts the toxicity associated with the formation of D-aminoacyl-tRNA entities in vivo and helps enforce protein L-homochirality. The sequence is that of D-aminoacyl-tRNA deacylase from Staphylococcus epidermidis (strain ATCC 35984 / DSM 28319 / BCRC 17069 / CCUG 31568 / BM 3577 / RP62A).